A 411-amino-acid polypeptide reads, in one-letter code: Putative nickel insertion protein (411 aa).

Belongs to the LarC family.

This is Putative nickel insertion protein from Acaryochloris marina (strain MBIC 11017).